We begin with the raw amino-acid sequence, 161 residues long: UPF0763 protein Cla_1130 (161 aa).

This sequence belongs to the UPF0763 family.

This chain is UPF0763 protein Cla_1130, found in Campylobacter lari (strain RM2100 / D67 / ATCC BAA-1060).